The following is a 98-amino-acid chain: N(2)-fixation sustaining protein CowN (98 aa).

The protein belongs to the CowN family.

Its function is as follows. Is required to sustain N(2)-dependent growth in the presence of low levels of carbon monoxide (CO). Probably acts by protecting the N(2) fixation ability of the nitrogenase complex, which is inactivated in the presence of CO. The chain is N(2)-fixation sustaining protein CowN from Dechloromonas aromatica (strain RCB).